We begin with the raw amino-acid sequence, 162 residues long: Nucleotide-binding protein Mpe_A3039 (162 aa).

This sequence belongs to the YajQ family.

Functionally, nucleotide-binding protein. This is Nucleotide-binding protein Mpe_A3039 from Methylibium petroleiphilum (strain ATCC BAA-1232 / LMG 22953 / PM1).